A 123-amino-acid chain; its full sequence is Fluoride-specific ion channel FluC (123 aa).

The next 4 helical transmembrane spans lie at 7-27, 39-59, 68-88, and 100-120; these read VAIA…SGIL, LVNS…FWGI, FFGT…YETF, and ALNI…GFIL. 2 residues coordinate Na(+): Gly75 and Ser78.

This sequence belongs to the fluoride channel Fluc/FEX (TC 1.A.43) family.

Its subcellular location is the cell membrane. The catalysed reaction is fluoride(in) = fluoride(out). Na(+) is not transported, but it plays an essential structural role and its presence is essential for fluoride channel function. Its function is as follows. Fluoride-specific ion channel. Important for reducing fluoride concentration in the cell, thus reducing its toxicity. The sequence is that of Fluoride-specific ion channel FluC from Thermococcus onnurineus (strain NA1).